The following is a 155-amino-acid chain: Immunoglobulin domain-containing protein oig-4 (155 aa).

The N-terminal stretch at 1–22 (MSFRLWGRCIFFFCFLLEAIDS) is a signal peptide. N-linked (GlcNAc...) asparagine glycans are attached at residues Asn-55 and Asn-114. The Ig-like C2-type domain maps to 73 to 154 (GYKLLIICKA…MAKNFKAEYT (82 aa)). Cys-80 and Cys-136 are joined by a disulfide.

In terms of assembly, interacts with the non-alpha subunit of nicotinic acetylcholine receptor unc-29 and lev-10 to stabilize the complex formed between unc-29 and lev-10. In terms of tissue distribution, expressed in body wall muscle cells, the pharyngeal muscle cell pm6 and in four head neurons.

It is found in the synapse. The protein localises to the secreted. Functionally, required for the localization of acetylcholine receptors at neuromuscular junctions and for subsequently controlling the response evoked by receptor stimulation. This chain is Immunoglobulin domain-containing protein oig-4, found in Caenorhabditis elegans.